We begin with the raw amino-acid sequence, 251 residues long: Hydroxyacylglutathione hydrolase (251 aa).

Positions 53, 55, 57, 58, 110, 127, and 165 each coordinate Zn(2+).

Belongs to the metallo-beta-lactamase superfamily. Glyoxalase II family. Monomer. Requires Zn(2+) as cofactor.

The enzyme catalyses an S-(2-hydroxyacyl)glutathione + H2O = a 2-hydroxy carboxylate + glutathione + H(+). It participates in secondary metabolite metabolism; methylglyoxal degradation; (R)-lactate from methylglyoxal: step 2/2. Its function is as follows. Thiolesterase that catalyzes the hydrolysis of S-D-lactoyl-glutathione to form glutathione and D-lactic acid. This Pectobacterium atrosepticum (strain SCRI 1043 / ATCC BAA-672) (Erwinia carotovora subsp. atroseptica) protein is Hydroxyacylglutathione hydrolase.